The following is a 438-amino-acid chain: Protein maelstrom 2 (438 aa).

Residues 2 to 69 constitute a DNA-binding region (HMG box); sequence APKKRNGFMT…LERTAKKERL (68 aa). The interval 374–438 is disordered; that stretch reads KEMGSRDLSP…NMGAGKKIAR (65 aa). Over residues 381–391 the composition is skewed to polar residues; the sequence is LSPSSSHQSVS.

This sequence belongs to the maelstrom family.

Its subcellular location is the cytoplasm. It is found in the nucleus. Its function is as follows. Involved both in the piRNA and miRNA metabolic processes. As a component of the meiotic nuage, plays a central role during oogenesis by repressing transposable elements and preventing their mobilization, which is essential for the germline integrity. Repression of transposable elements is mediated via the piRNA metabolic process, which mediates the repression of transposable elements during meiosis by forming complexes composed of piRNAs and Piwi proteins and governs the repression of transposons. As a nuclear component, it is required for proper differentiation in the germline stem cell (GSC) lineage by repressing microRNA-7 (miR-7), thereby acting as an indirect regulator of bag-of-marbles (Bam). Acts by binding to the promoter of miR-7 gene and repressing its expression; miR-7 repression alleviates the Bam repression by miR-7, thereby allowing differentiation in the germline stem cell (GSC) lineage. This chain is Protein maelstrom 2 (mael2), found in Drosophila persimilis (Fruit fly).